Here is a 393-residue protein sequence, read N- to C-terminus: Na(+)/H(+) antiporter NhaA 1 (393 aa).

11 helical membrane-spanning segments follow: residues 23–43 (AGGV…NSPF), 58–78 (LSLT…LVGL), 96–116 (MLPG…FTAF), 126–146 (GWAV…SLLG), 155–175 (VFLA…IAIF), 178–198 (AEIS…LFVM), 224–244 (GVHA…KAAP), 265–285 (VAFI…FAGL), 298–318 (IMLG…WLAI), 334–354 (LYGV…IGLL), and 367–387 (IGVL…LRLV).

Belongs to the NhaA Na(+)/H(+) (TC 2.A.33) antiporter family.

It localises to the cell inner membrane. It catalyses the reaction Na(+)(in) + 2 H(+)(out) = Na(+)(out) + 2 H(+)(in). In terms of biological role, na(+)/H(+) antiporter that extrudes sodium in exchange for external protons. In Brucella anthropi (strain ATCC 49188 / DSM 6882 / CCUG 24695 / JCM 21032 / LMG 3331 / NBRC 15819 / NCTC 12168 / Alc 37) (Ochrobactrum anthropi), this protein is Na(+)/H(+) antiporter NhaA 1.